A 122-amino-acid polypeptide reads, in one-letter code: NADH-ubiquinone oxidoreductase chain 3 (122 aa).

3 helical membrane passes run 12–32, 66–86, and 91–111; these read VLIF…LSYV, LVAI…PWAV, and VTIF…VGFI.

This sequence belongs to the complex I subunit 3 family.

The protein localises to the mitochondrion membrane. It catalyses the reaction a ubiquinone + NADH + 5 H(+)(in) = a ubiquinol + NAD(+) + 4 H(+)(out). Core subunit of the mitochondrial membrane respiratory chain NADH dehydrogenase (Complex I) that is believed to belong to the minimal assembly required for catalysis. Complex I functions in the transfer of electrons from NADH to the respiratory chain. The immediate electron acceptor for the enzyme is believed to be ubiquinone. In Reclinomonas americana, this protein is NADH-ubiquinone oxidoreductase chain 3 (NAD3).